We begin with the raw amino-acid sequence, 657 residues long: Transmembrane protein 232 (657 aa).

2 consecutive transmembrane segments (helical) span residues I168–F188 and W353–A373.

It localises to the membrane. Plays a critical role for male fertility and sperm motility by regulating sperm cytoplasm removal and maintaining axoneme integrity. This Homo sapiens (Human) protein is Transmembrane protein 232 (TMEM232).